The primary structure comprises 69 residues: Conotoxin Eb6.1 (69 aa).

An N-terminal signal peptide occupies residues 1–17 (VLIIAVLFLTACQLTTA). Residues 18 to 41 (ETYSRGRQKHRARRSTDKNSKWTR) constitute a propeptide that is removed on maturation. Intrachain disulfides connect C43–C57, C50–C61, and C56–C68.

Belongs to the conotoxin O1 superfamily. Expressed by the venom duct.

The protein localises to the secreted. In Conus ebraeus (Hebrew cone), this protein is Conotoxin Eb6.1 (E1).